The chain runs to 546 residues: uncharacterized protein (546 aa).

9 helical membrane passes run 27–46 (EALV…PFVF), 59–78 (NGLI…ALVT), 83–100 (FALI…YAIL), 114–134 (SVLF…AYAA), 143–163 (PLII…IPIF), 176–196 (MLYS…ALGI), 204–224 (VIAV…VFTA), 237–257 (LSSA…FGVF), and 268–288 (MIWI…LIGW).

Its subcellular location is the cell membrane. This is an uncharacterized protein from Bacillus subtilis (strain 168).